The sequence spans 197 residues: Protein GrpE (197 aa).

The disordered stretch occupies residues 1–40 (MSSKEQKTPEGQAPEEIIMDQHEEIEAVEPEASAEQVDPR).

Belongs to the GrpE family. In terms of assembly, homodimer.

The protein resides in the cytoplasm. Functionally, participates actively in the response to hyperosmotic and heat shock by preventing the aggregation of stress-denatured proteins, in association with DnaK and GrpE. It is the nucleotide exchange factor for DnaK and may function as a thermosensor. Unfolded proteins bind initially to DnaJ; upon interaction with the DnaJ-bound protein, DnaK hydrolyzes its bound ATP, resulting in the formation of a stable complex. GrpE releases ADP from DnaK; ATP binding to DnaK triggers the release of the substrate protein, thus completing the reaction cycle. Several rounds of ATP-dependent interactions between DnaJ, DnaK and GrpE are required for fully efficient folding. In Escherichia coli (strain K12 / DH10B), this protein is Protein GrpE.